The primary structure comprises 255 residues: MKGVYGLRKAIIAGNWKMHNTIDESVKLVEELIPKVKEAECEVVVCPPFICLPKIREITEGTNIKVGAQNMYFEEKGAFTGEVSPLMLEKLNIDYVIIGHSERRQYFKETDQTVNKKLKAAFEHNLIPILCVGETLDEKENGVTEEVVSKQVKLGLFELKEEQVEKLVIAYEPIWAIGTGKTATSEEANEVIALIRSTVKSLYGDKVAESLRIQYGGSVKPSTIKEQMSMSDIDGALVGGASLKANDFSAIVNYK.

15 to 17 (NWK) serves as a coordination point for substrate. H100 functions as the Electrophile in the catalytic mechanism. E172 functions as the Proton acceptor in the catalytic mechanism. Substrate is bound by residues G178, S218, and 239–240 (GG).

Belongs to the triosephosphate isomerase family. Homodimer.

The protein resides in the cytoplasm. It catalyses the reaction D-glyceraldehyde 3-phosphate = dihydroxyacetone phosphate. The protein operates within carbohydrate biosynthesis; gluconeogenesis. Its pathway is carbohydrate degradation; glycolysis; D-glyceraldehyde 3-phosphate from glycerone phosphate: step 1/1. In terms of biological role, involved in the gluconeogenesis. Catalyzes stereospecifically the conversion of dihydroxyacetone phosphate (DHAP) to D-glyceraldehyde-3-phosphate (G3P). This Clostridium tetani (strain Massachusetts / E88) protein is Triosephosphate isomerase.